Reading from the N-terminus, the 406-residue chain is Argininosuccinate synthase (406 aa).

ATP-binding positions include 13-21 and Ala40; that span reads AYSGGLDTS. L-citrulline contacts are provided by Tyr91 and Ser96. Gly121 is an ATP binding site. 3 residues coordinate L-aspartate: Thr123, Asn127, and Asp128. L-citrulline is bound at residue Asn127. Residues Arg131, Ser182, Ser191, Glu267, and Tyr279 each contribute to the L-citrulline site.

This sequence belongs to the argininosuccinate synthase family. Type 1 subfamily. As to quaternary structure, homotetramer.

The protein resides in the cytoplasm. The enzyme catalyses L-citrulline + L-aspartate + ATP = 2-(N(omega)-L-arginino)succinate + AMP + diphosphate + H(+). It functions in the pathway amino-acid biosynthesis; L-arginine biosynthesis; L-arginine from L-ornithine and carbamoyl phosphate: step 2/3. The chain is Argininosuccinate synthase from Brucella anthropi (strain ATCC 49188 / DSM 6882 / CCUG 24695 / JCM 21032 / LMG 3331 / NBRC 15819 / NCTC 12168 / Alc 37) (Ochrobactrum anthropi).